The primary structure comprises 447 residues: Peptide-N(4)-(N-acetyl-beta-glucosaminyl)asparagine amidase (447 aa).

Residues C209, C212, C241, and C244 each coordinate Zn(2+). The active-site Nucleophile is C267. Residues H294 and D311 contribute to the active site.

Belongs to the transglutaminase-like superfamily. PNGase family. It depends on Zn(2+) as a cofactor.

The protein resides in the cytoplasm. It catalyses the reaction Hydrolysis of an N(4)-(acetyl-beta-D-glucosaminyl)asparagine residue in which the glucosamine residue may be further glycosylated, to yield a (substituted) N-acetyl-beta-D-glucosaminylamine and a peptide containing an aspartate residue.. Its function is as follows. Specifically deglycosylates the denatured form of N-linked glycoproteins in the cytoplasm and assists their proteasome-mediated degradation. Cleaves the beta-aspartyl-glucosamine (GlcNAc) of the glycan and the amide side chain of Asn, converting Asn to Asp. Prefers proteins containing high-mannose over those bearing complex type oligosaccharides. Can recognize misfolded proteins in the endoplasmic reticulum that are exported to the cytosol to be destroyed and deglycosylate them, while it has no activity toward native proteins. Deglycosylation is a prerequisite for subsequent proteasome-mediated degradation of some, but not all, misfolded glycoproteins. This is Peptide-N(4)-(N-acetyl-beta-glucosaminyl)asparagine amidase (PNG1) from Oryza sativa subsp. japonica (Rice).